The sequence spans 250 residues: 3-deoxy-manno-octulosonate cytidylyltransferase (250 aa).

Belongs to the KdsB family.

It localises to the cytoplasm. The catalysed reaction is 3-deoxy-alpha-D-manno-oct-2-ulosonate + CTP = CMP-3-deoxy-beta-D-manno-octulosonate + diphosphate. The protein operates within nucleotide-sugar biosynthesis; CMP-3-deoxy-D-manno-octulosonate biosynthesis; CMP-3-deoxy-D-manno-octulosonate from 3-deoxy-D-manno-octulosonate and CTP: step 1/1. It functions in the pathway bacterial outer membrane biogenesis; lipopolysaccharide biosynthesis. Functionally, activates KDO (a required 8-carbon sugar) for incorporation into bacterial lipopolysaccharide in Gram-negative bacteria. The chain is 3-deoxy-manno-octulosonate cytidylyltransferase from Yersinia enterocolitica serotype O:8 / biotype 1B (strain NCTC 13174 / 8081).